Reading from the N-terminus, the 123-residue chain is Cytochrome b-c1 complex subunit 7 (123 aa).

This sequence belongs to the UQCRB/QCR7 family. As to quaternary structure, component of the ubiquinol-cytochrome c oxidoreductase (cytochrome b-c1 complex, complex III, CIII), a multisubunit enzyme composed of 3 respiratory subunits cytochrome b, cytochrome c1 and Rieske protein, 2 core protein subunits, and additional low-molecular weight protein subunits. The complex exists as an obligatory dimer and forms supercomplexes (SCs) in the inner mitochondrial membrane with cytochrome c oxidase (complex IV, CIV). In terms of processing, the N-terminus is blocked.

It localises to the mitochondrion inner membrane. Component of the ubiquinol-cytochrome c oxidoreductase, a multisubunit transmembrane complex that is part of the mitochondrial electron transport chain which drives oxidative phosphorylation. The respiratory chain contains 3 multisubunit complexes succinate dehydrogenase (complex II, CII), ubiquinol-cytochrome c oxidoreductase (cytochrome b-c1 complex, complex III, CIII) and cytochrome c oxidase (complex IV, CIV), that cooperate to transfer electrons derived from NADH and succinate to molecular oxygen, creating an electrochemical gradient over the inner membrane that drives transmembrane transport and the ATP synthase. The cytochrome b-c1 complex catalyzes electron transfer from ubiquinol to cytochrome c, linking this redox reaction to translocation of protons across the mitochondrial inner membrane, with protons being carried across the membrane as hydrogens on the quinol. In the process called Q cycle, 2 protons are consumed from the matrix, 4 protons are released into the intermembrane space and 2 electrons are passed to cytochrome c. In Solanum tuberosum (Potato), this protein is Cytochrome b-c1 complex subunit 7.